Here is a 226-residue protein sequence, read N- to C-terminus: 7-cyano-7-deazaguanine synthase (226 aa).

10–20 (FSGGQDSTTLA) contacts ATP. Residues C190, C205, C208, and C211 each contribute to the Zn(2+) site.

This sequence belongs to the QueC family. Requires Zn(2+) as cofactor.

It catalyses the reaction 7-carboxy-7-deazaguanine + NH4(+) + ATP = 7-cyano-7-deazaguanine + ADP + phosphate + H2O + H(+). It participates in purine metabolism; 7-cyano-7-deazaguanine biosynthesis. Its function is as follows. Catalyzes the ATP-dependent conversion of 7-carboxy-7-deazaguanine (CDG) to 7-cyano-7-deazaguanine (preQ(0)). The sequence is that of 7-cyano-7-deazaguanine synthase from Helicobacter pylori (strain ATCC 700392 / 26695) (Campylobacter pylori).